A 212-amino-acid chain; its full sequence is WAP four-disulfide core domain protein 1 (212 aa).

An N-terminal signal peptide occupies residues 1 to 26 (MGSCDRKALWALSFLLLLLGSSSVQG). Residues 43 to 62 (EEVAATGSRQPHADRCPPPP) form a disordered region. The 50-residue stretch at 51–100 (RQPHADRCPPPPRTLPPGACQATRCQSDSECPRHRRCCYNGCAYACLEAV) folds into the WAP domain. 4 cysteine pairs are disulfide-bonded: Cys-58/Cys-88, Cys-70/Cys-92, Cys-75/Cys-87, and Cys-81/Cys-96. A disordered region spans residues 191 to 212 (EYPEGDSKYVAEPGKGQQRHFP).

Vascular smooth muscle and prostate. Periacinar ring.

It localises to the secreted. Has growth inhibitory activity. In Rattus norvegicus (Rat), this protein is WAP four-disulfide core domain protein 1 (Wfdc1).